Here is a 272-residue protein sequence, read N- to C-terminus: uncharacterized protein (272 aa).

Composition is skewed to basic and acidic residues over residues 136-156 (VRRE…HIDI) and 231-240 (GCKESRRNEP). 2 disordered regions span residues 136-157 (VRRE…IDIH) and 174-272 (VKPK…WAAF). Residues 243 to 252 (DLSQLKKNLP) are compositionally biased toward polar residues. Residues 253 to 272 (STAGSGSSKSTGAASGWAAF) show a composition bias toward low complexity.

This is an uncharacterized protein from Arabidopsis thaliana (Mouse-ear cress).